The primary structure comprises 110 residues: Large ribosomal subunit protein uL22 (110 aa).

The protein belongs to the universal ribosomal protein uL22 family. Part of the 50S ribosomal subunit.

This protein binds specifically to 23S rRNA; its binding is stimulated by other ribosomal proteins, e.g. L4, L17, and L20. It is important during the early stages of 50S assembly. It makes multiple contacts with different domains of the 23S rRNA in the assembled 50S subunit and ribosome. Its function is as follows. The globular domain of the protein is located near the polypeptide exit tunnel on the outside of the subunit, while an extended beta-hairpin is found that lines the wall of the exit tunnel in the center of the 70S ribosome. The chain is Large ribosomal subunit protein uL22 from Acinetobacter baylyi (strain ATCC 33305 / BD413 / ADP1).